A 487-amino-acid chain; its full sequence is Acetylcholine receptor subunit beta-type acr-3 (487 aa).

The signal sequence occupies residues 1 to 20 (MQKIWLFSIITIFLITELQC). The Extracellular portion of the chain corresponds to 21 to 231 (YPNSAEERLL…KIRRKALFYT (211 aa)). The N-linked (GlcNAc...) asparagine glycan is linked to Asn46. A disulfide bridge connects residues Cys151 and Cys165. Transmembrane regions (helical) follow at residues 232 to 252 (VILI…FYLP), 259 to 279 (ITLA…VSKI), and 294 to 314 (LLMT…IINV). Residues 315-439 (YFRGPATHIM…WKFVSVVIDR (125 aa)) lie on the Cytoplasmic side of the membrane. The tract at residues 380–400 (ISEQPKQTSRKDGSSSEEKLS) is disordered. The helical transmembrane segment at 440 to 460 (LLLYLFFAVTTGGTVGILLSA) threads the bilayer.

This sequence belongs to the ligand-gated ion channel (TC 1.A.9) family. Acetylcholine receptor (TC 1.A.9.1) subfamily. As to quaternary structure, component of nicotinic acetylcholine receptor. In cholinergic motoneurons, composed of 2 non-alpha subunits acr-2 and acr-3, and 3 alpha subunits unc-38, unc-63 and acr-12.

It is found in the postsynaptic cell membrane. The protein resides in the cell membrane. In terms of biological role, non-alpha subunit of nicotinic acetylcholine receptor (nAChR). Probably acts in cholinergic motoneurons to regulate presynaptic neurotransmitter release, thereby ensuring normal level of excitation of cholinergic motoneurons during locomotion. The sequence is that of Acetylcholine receptor subunit beta-type acr-3 (acr-3) from Caenorhabditis elegans.